Consider the following 404-residue polypeptide: L-cysteine:1D-myo-inositol 2-amino-2-deoxy-alpha-D-glucopyranoside ligase (404 aa).

Cys32 is a Zn(2+) binding site. Residues 32-35, Thr47, and 70-72 each bind L-cysteinyl-5'-AMP; these read CGIT and NIT. Residues 34-44 carry the 'HIGH' region motif; that stretch reads ITPYDSTHLGH. The 'ERGGDP' region signature appears at 176 to 181; sequence ERGGDP. Trp216 serves as a coordination point for L-cysteinyl-5'-AMP. Cys220 is a binding site for Zn(2+). 238-240 contributes to the L-cysteinyl-5'-AMP binding site; sequence GSD. His245 serves as a coordination point for Zn(2+). Ile272 contributes to the L-cysteinyl-5'-AMP binding site. Positions 278–282 match the 'KMSKS' region motif; it reads KMSKS.

It belongs to the class-I aminoacyl-tRNA synthetase family. MshC subfamily. In terms of assembly, monomer. The cofactor is Zn(2+).

The catalysed reaction is 1D-myo-inositol 2-amino-2-deoxy-alpha-D-glucopyranoside + L-cysteine + ATP = 1D-myo-inositol 2-(L-cysteinylamino)-2-deoxy-alpha-D-glucopyranoside + AMP + diphosphate + H(+). Functionally, catalyzes the ATP-dependent condensation of GlcN-Ins and L-cysteine to form L-Cys-GlcN-Ins. In Corynebacterium glutamicum (strain ATCC 13032 / DSM 20300 / JCM 1318 / BCRC 11384 / CCUG 27702 / LMG 3730 / NBRC 12168 / NCIMB 10025 / NRRL B-2784 / 534), this protein is L-cysteine:1D-myo-inositol 2-amino-2-deoxy-alpha-D-glucopyranoside ligase (mshC).